The sequence spans 293 residues: MLLLETHNRILYDEVISHFEGDRRVNNIFADFDGVKFNVQTSDDKSSLMVSVSLHAAADLLKNGGSALLKSVYGDMLQAKPEGGYDVTLVIQSSFSGNKEELAKKVSLLKRHLVAAPFLMVFEGIEAKKPLPEIIAINYRTDETFYLKPQGDNVIVIFDIAFKDADDVILSKIFLQSFVDVRKTISNVPSITFSQKDPPLELKGVKGVRAGQANHGFVSFVLFPAHIKKPQESADLIQTFRDYLHYHIKCAKGYMHTSMRNRVESLIQVLNRAKPEPVNTVKRTITGKFFKQN.

The protein belongs to the ARPC2 family. In terms of assembly, component of the Arp2/3 complex composed of arpB/Arp2, arpC/Arp3, arcA/p41-arc, arcB/p34-arc, arcC/p21-arc, arcD/p20-arc and arcE/p16-arc. Interacts with carmil (via the region between the LRR domain and COOH-terminal proline-rich domain); carmil is required for Arp2/3-dependent actin nucleation. Arp2/3 complex, MyoB, MyoC, and the alpha and beta subunits of capping protein all form a larger complex with carmil.

It localises to the cytoplasm. The protein resides in the cytoskeleton. It is found in the cell projection. The protein localises to the cytosol. Its subcellular location is the cell cortex. It localises to the pseudopodium. Functionally, functions as a component of the Arp2/3 complex which is involved in regulation of actin polymerization and together with an activating nucleation-promoting factor (NPF) mediates the formation of branched actin networks. Seems to contact the pointed end of the daughter actin filament. The Arp2/3 complex is involved in organizing the actin system in cell motility and chemotaxis, in phagocytosis and macropinocytosis, at late steps of endosome processing, and in mitosis. In concert with a group of other proteins, the Arp2/3 complex plays a general role in the rapid activation and adaptation of the actin system to its multiple functions. This chain is Actin-related protein 2/3 complex subunit 2 (arcB), found in Dictyostelium discoideum (Social amoeba).